The chain runs to 805 residues: Angiotensin-converting enzyme 2 (805 aa).

The first 17 residues, 1–17 (MSSSSWLLLSLVAVTAA), serve as a signal peptide directing secretion. The Extracellular portion of the chain corresponds to 18 to 740 (QSTIEEQAKT…LGPPNQPPVS (723 aa)). In terms of domain architecture, Peptidase M2 spans 19–607 (STIEEQAKTF…QNKNSFVGWS (589 aa)). The tract at residues 30–41 (DKFNHEAEDLFY) is interaction with SARS-CoV spike glycoprotein. N-linked (GlcNAc...) asparagine glycosylation occurs at Asn-53. An interaction with SARS-CoV spike glycoprotein region spans residues 82-84 (MYP). Residues Asn-90 and Asn-103 are each glycosylated (N-linked (GlcNAc...) asparagine). The cysteines at positions 133 and 141 are disulfide-linked. Arg-169 provides a ligand contact to chloride. Arg-273 lines the substrate pocket. An N-linked (GlcNAc...) asparagine glycan is attached at Asn-322. Cys-344 and Cys-361 are disulfide-bonded. 345–346 (HP) is a binding site for substrate. An interaction with SARS-CoV spike glycoprotein region spans residues 353–357 (KGDFR). His-374 is a binding site for Zn(2+). The Proton acceptor role is filled by Glu-375. Zn(2+) is bound by residues His-378 and Glu-402. Residue Asn-432 is glycosylated (N-linked (GlcNAc...) asparagine). Chloride-binding residues include Trp-477 and Lys-481. The active-site Proton donor is His-505. Residue Tyr-515 participates in substrate binding. A disulfide bridge links Cys-530 with Cys-542. N-linked (GlcNAc...) asparagine glycosylation is present at Asn-546. One can recognise a Collectrin-like domain in the interval 614-805 (ADQSIKVRIS…QNTDDVQTSF (192 aa)). The essential for cleavage by ADAM17 stretch occupies residues 652 to 659 (RQYFLKVK). Asn-690 carries N-linked (GlcNAc...) asparagine glycosylation. Residues 697–716 (RTEVEKAIRMSRSRINDAFR) form an essential for cleavage by TMPRSS11D and TMPRSS2 region. A helical transmembrane segment spans residues 741-761 (IWLIVFGVVMGVIVVGIVILI). Residues 762-805 (FTGIRDRKKKNKARSGENPYASIDISKGENNPGFQNTDDVQTSF) are Cytoplasmic-facing. Residues 772 to 805 (NKARSGENPYASIDISKGENNPGFQNTDDVQTSF) are disordered. The LIR motif lies at 778-786 (ENPYASIDI). At Tyr-781 the chain carries Phosphotyrosine. The short motif at 781–784 (YASI) is the Endocytic sorting signal element. The SH2-binding motif lies at 781–785 (YASID). A Phosphoserine modification is found at Ser-783. Lys-788 is covalently cross-linked (Glycyl lysine isopeptide (Lys-Gly) (interchain with G-Cter in ubiquitin)). The segment covering 789-805 (GENNPGFQNTDDVQTSF) has biased composition (polar residues). A PTB motif is present at residues 792 to 795 (NPGF). Residues 803-805 (TSF) carry the PDZ-binding motif.

This sequence belongs to the peptidase M2 family. As to quaternary structure, homodimer. Interacts with the catalytically active form of TMPRSS2. Interacts with SLC6A19; this interaction is essential for expression and function of SLC6A19 in intestine. Interacts with ITGA5:ITGB1. Probably interacts (via endocytic sorting signal motif) with AP2M1; the interaction is inhibited by phosphorylation of Tyr-781. Interacts (via PDZ-binding motif) with NHERF1 (via PDZ domains); the interaction may enhance ACE2 membrane residence. (Microbial infection) Interacts with SARS coronavirus/SARS-CoV spike protein. In terms of assembly, (Microbial infection) Interacts with SARS coronavirus-2/SARS-CoV-2 spike protein (via RBD domain). As to quaternary structure, (Microbial infection) Interacts with human coronavirus NL63 spike protein. (Microbial infection) Interacts with human coronavirus NL63/HCoV-NL63 spike glycoprotein. In terms of assembly, (Microbial infection) Interacts with SARS coronavirus-2/SARS-CoV-2 spike protein; the interaction is increased by AVP/Arg-vasopressin with which they may form a complex. Requires Zn(2+) as cofactor. The cofactor is chloride. In terms of processing, N-glycosylation on Asn-90 may limit SARS infectivity. Proteolytic cleavage by ADAM17 generates a secreted form. Also cleaved by serine proteases: TMPRSS2, TMPRSS11D and HPN/TMPRSS1. Post-translationally, phosphorylated. Phosphorylation at Tyr-781 probably inhibits interaction with AP2M1 and enables interactions with proteins containing SH2 domains. In terms of processing, ubiquitinated. Ubiquitinated on Lys-788 via 'Lys-48'-linked ubiquitin. 'Lys-48'-linked deubiquitinated by USP50 on the Lys-788; leading to its stabilization. Expressed in endothelial cells from small and large arteries, and in arterial smooth muscle cells (at protein level). Expressed in enterocytes of the small intestine, Leydig cells and Sertoli cells (at protein level). Expressed in the renal proximal tubule and the small intestine (at protein level). Expressed in heart, kidney, testis, and gastrointestinal system (at protein level). In lung, expressed at low levels in some alveolar type 2 cells, the expression seems to be individual-specific (at protein level). Expressed in nasal epithelial cells (at protein level). Coexpressed with TMPRSS2 within some lung alveolar type 2 cells, ileal absorptive enterocytes, intestinal epithelial cells, cornea, gallbladder and nasal goblet secretory cells. Coexpressed with TMPRSS4 within mature enterocytes. In terms of tissue distribution, expressed in nasal and bronchial epithelial cells (at protein level).

The protein resides in the secreted. The protein localises to the cell membrane. It is found in the cytoplasm. It localises to the cell projection. Its subcellular location is the cilium. The protein resides in the apical cell membrane. The enzyme catalyses angiotensin II + H2O = angiotensin-(1-7) + L-phenylalanine. The catalysed reaction is angiotensin I + H2O = angiotensin-(1-9) + L-leucine. It catalyses the reaction bradykinin(1-8) + H2O = bradykinin(1-7) + L-phenylalanine. It carries out the reaction neurotensin + H2O = neurotensin-(1-12) + L-leucine. The enzyme catalyses neurotensin-(1-8) + H2O = neurotensin-(1-7) + L-arginine. The catalysed reaction is kinetensin + H2O = kinetensin-(1-8) + L-leucine. It catalyses the reaction dynorphin A-(1-13) + H2O = dynorphin A-(1-12) + L-lysine. It carries out the reaction apelin-13 + H2O = apelin-12 + L-phenylalanine. The enzyme catalyses [Pyr1]apelin-13 + H2O = [Pyr1]apelin-12 + L-phenylalanine. The catalysed reaction is apelin-17 + H2O = apelin-16 + L-phenylalanine. It catalyses the reaction beta-casomorphin-7 + H2O = beta-casomorphin-6 + L-isoleucine. It carries out the reaction neocasomorphin + H2O = neocasomorphin-(1-5) + L-isoleucine. Its activity is regulated as follows. Regulated by chloride and fluoride, but not bromide. Chloride increases angiotensin I and decreases angiotensin II cleavage. Inhibited by MLN-4760, cFP_Leu, and EDTA, but not by the ACE inhibitors lisinopril, captopril and enalaprilat. Highly potent and selective in vitro ACE2 inhibitors were identified. Functionally, essential counter-regulatory carboxypeptidase of the renin-angiotensin hormone system that is a critical regulator of blood volume, systemic vascular resistance, and thus cardiovascular homeostasis. Converts angiotensin I to angiotensin 1-9, a nine-amino acid peptide with anti-hypertrophic effects in cardiomyocytes, and angiotensin II to angiotensin 1-7, which then acts as a beneficial vasodilator and anti-proliferation agent, counterbalancing the actions of the vasoconstrictor angiotensin II. Also removes the C-terminal residue from three other vasoactive peptides, neurotensin, kinetensin, and des-Arg bradykinin, but is not active on bradykinin. Also cleaves other biological peptides, such as apelins (apelin-13, [Pyr1]apelin-13, apelin-17, apelin-36), casomorphins (beta-casomorphin-7, neocasomorphin) and dynorphin A with high efficiency. In addition, ACE2 C-terminus is homologous to collectrin and is responsible for the trafficking of the neutral amino acid transporter SL6A19 to the plasma membrane of gut epithelial cells via direct interaction, regulating its expression on the cell surface and its catalytic activity. (Microbial infection) Acts as a receptor for human coronaviruses SARS-CoV and SARS-CoV-2, as well as human coronavirus NL63/HCoV-NL63. In terms of biological role, non-functional as a carboxypeptidase. Its function is as follows. (Microbial infection) Non-functional as a receptor for human coronavirus SARS-CoV-2. The polypeptide is Angiotensin-converting enzyme 2 (Homo sapiens (Human)).